The primary structure comprises 692 residues: Enzymatic polyprotein (692 aa).

Asp-36 acts as the For protease activity in catalysis. The Reverse transcriptase domain maps to 227–411 (LKKGLIRESQ…QEIEYLGLKI (185 aa)).

Belongs to the caulimoviridae enzymatic polyprotein family.

The enzyme catalyses DNA(n) + a 2'-deoxyribonucleoside 5'-triphosphate = DNA(n+1) + diphosphate. Encodes for at least two polypeptides: protease (PR) and reverse transcriptase (RT). The protease processes the polyprotein in cis. Reverse transcriptase is multifunctional enzyme that converts the viral RNA genome into dsDNA in viral cytoplasmic capsids. This enzyme displays a DNA polymerase activity that can copy either DNA or RNA templates, and a ribonuclease H (RNase H) activity that cleaves the RNA strand of RNA-DNA heteroduplexes in a partially processive 3'- to 5'-endonucleasic mode. Neo-synthesized pregenomic RNA (pgRNA) are encapsidated, and reverse-transcribed inside the nucleocapsid. Partial (+)DNA is synthesized from the (-)DNA template and generates the relaxed circular DNA (RC-DNA) genome. After budding and infection, the RC-DNA migrates in the nucleus, and is converted into a plasmid-like covalently closed circular DNA (cccDNA). The chain is Enzymatic polyprotein from Soybean chlorotic mottle virus.